The sequence spans 346 residues: B3 domain-containing protein At3g25182 (346 aa).

Positions lysine 168–alanine 187 are disordered. Positions phenylalanine 237 to serine 338 form a DNA-binding region, TF-B3.

Its subcellular location is the nucleus. This is B3 domain-containing protein At3g25182 from Arabidopsis thaliana (Mouse-ear cress).